The following is a 485-amino-acid chain: Ribosomal protein uS12 methylthiotransferase RimO (485 aa).

Residues 14-124 (PKVGFISLGC…VMAHVRELLP (111 aa)) form the MTTase N-terminal domain. The [4Fe-4S] cluster site is built by Cys-23, Cys-59, Cys-88, Cys-167, Cys-171, and Cys-174. Residues 153-389 (LTPRHYAYVK…MEVAQRISRE (237 aa)) enclose the Radical SAM core domain. One can recognise a TRAM domain in the interval 392–468 (AEKVGRVLDV…EYDLYGEVIH (77 aa)).

Belongs to the methylthiotransferase family. RimO subfamily. The cofactor is [4Fe-4S] cluster.

It localises to the cytoplasm. It catalyses the reaction L-aspartate(89)-[ribosomal protein uS12]-hydrogen + (sulfur carrier)-SH + AH2 + 2 S-adenosyl-L-methionine = 3-methylsulfanyl-L-aspartate(89)-[ribosomal protein uS12]-hydrogen + (sulfur carrier)-H + 5'-deoxyadenosine + L-methionine + A + S-adenosyl-L-homocysteine + 2 H(+). Catalyzes the methylthiolation of an aspartic acid residue of ribosomal protein uS12. This Deinococcus geothermalis (strain DSM 11300 / CIP 105573 / AG-3a) protein is Ribosomal protein uS12 methylthiotransferase RimO.